The primary structure comprises 267 residues: Serine/arginine-rich splicing factor 7 (267 aa).

Positions 40–113 (TKVYVGNLGT…SRVRVELSTG (74 aa)) constitute an RRM domain. K53 is subject to N6-acetyllysine; alternate. A Glycyl lysine isopeptide (Lys-Gly) (interchain with G-Cter in SUMO2); alternate cross-link involves residue K53. S61 carries the post-translational modification Phosphoserine. The sufficient for interaction with NXF1 stretch occupies residues 110–127 (LSTGMPRRSRFDRPPARR). The CCHC-type zinc-finger motif lies at 133–150 (DRCYECGEKGHYAYDCHR). The span at 152 to 209 (SRRRRSRSRSRSHSRSRGRRYSRSRSRSRGRRSRSASPRRSRSVSLRRSRSASLRRSR) shows a compositional bias: basic residues. The interval 152 to 267 (SRRRRSRSRS…HRSASPERMD (116 aa)) is disordered. 4 tandem repeats follow at residues 182 to 189 (RRSRSASP), 190 to 197 (RRSRSVSL), 198 to 205 (RRSRSASL), and 206 to 213 (RRSRSGSI). Positions 182-255 (RRSRSASPRR…SPKRSRSPSG (74 aa)) are 6 X 8 AA repeats of R-R-S-R-S-X-S-X. A phosphoserine mark is found at S192, S194, and S196. Residues S210, S212, S221, S223, and S225 each carry the phosphoserine modification. Positions 223–251 (SRSRSRSRSISRPRSSRSKSRSPSPKRSR) are enriched in basic residues. A 5; approximate repeat occupies 240-247 (SKSRSPSP). One copy of the 6; approximate repeat lies at 248–255 (KRSRSPSG). Phosphoserine occurs at positions 260 and 262.

The protein belongs to the splicing factor SR family. Found in large molecular weight complexes containing CCNL1 and the p110 isoforms of either CDC2L1 or CDC2L2. Interacts with CCNL2 and CPSF6. Interacts with NXF1. Interacts with YTHDC1. Extensively phosphorylated on serine residues in the RS domain.

Its subcellular location is the nucleus. It localises to the cytoplasm. Functionally, required for pre-mRNA splicing. Represses the splicing of MAPT/Tau exon 10. May function as export adapter involved in mRNA nuclear export such as of histone H2A. Binds mRNA which is thought to be transferred to the NXF1-NXT1 heterodimer for export (TAP/NXF1 pathway); enhances NXF1-NXT1 RNA-binding activity. RNA-binding is semi-sequence specific. The sequence is that of Serine/arginine-rich splicing factor 7 (Srsf7) from Mus musculus (Mouse).